The chain runs to 418 residues: Probable aminotransferase Rv1178 (418 aa).

Residues 22–42 (GQGWHDRERPASGQGSGAAER) form a disordered region.

Belongs to the class-I pyridoxal-phosphate-dependent aminotransferase family. The cofactor is pyridoxal 5'-phosphate.

The protein is Probable aminotransferase Rv1178 of Mycobacterium tuberculosis (strain ATCC 25618 / H37Rv).